Here is a 380-residue protein sequence, read N- to C-terminus: Probable RAD2-like endonuclease 076L (380 aa).

Positions 1–101 are N-domain; it reads MGIKNLTQFL…QKIVSKTDAI (101 aa). D32, E73, E191, E193, D212, D214, and D281 together coordinate Mg(2+). The segment at 156–301 is I-domain; the sequence is IDRRRKYEFS…EKAYKYISDY (146 aa).

This sequence belongs to the XPG/RAD2 endonuclease family. It depends on Mg(2+) as a cofactor.

The protein localises to the host nucleus. Probable endonuclease. In Invertebrate iridescent virus 3 (IIV-3), this protein is Probable RAD2-like endonuclease 076L.